Consider the following 686-residue polypeptide: Putative cuticle collagen 99 (686 aa).

Disordered regions lie at residues 42–79 (PPIGNSDDNSDDVAKSRKVRNSCMCPPGPPGERGPVGP) and 163–444 (GPIG…SLVA). Residues 67 to 79 (PPGPPGERGPVGP) show a composition bias toward pro residues. 3 triple-helical region regions span residues 142 to 201 (GMPG…KGDR), 230 to 263 (GPPGPPGPPGPPGPAGRDGRHGMKGDRGLPGFDG), and 268 to 296 (GPKGETGNPGRDGIPGARGPPGERGEKGD). Residues 231-243 (PPGPPGPPGPPGP) show a composition bias toward pro residues. The span at 246 to 256 (RDGRHGMKGDR) shows a compositional bias: basic and acidic residues. Low complexity predominate over residues 306 to 318 (GQSVSTVSSSGSQ). Basic and acidic residues-rich tracts occupy residues 361–373 (EKGERGERGETGD) and 401–417 (RDGRPGEKGEKGEHGLR). Residues 394 to 439 (GPPGPPGRDGRPGEKGEKGEHGLRGDMGLPGPEGTPGKRGRRGRHG) form a triple-helical region region. N-linked (GlcNAc...) asparagine glycans are attached at residues Asn-446 and Asn-535. The segment at 475-650 (KNVIPGPPGP…TGPDGLPLPY (176 aa)) is disordered. Triple-helical region regions lie at residues 479–536 (PGPP…SGNQ), 538–576 (GPRGPPGLPGPPGEKGDLGPPGLPGQPGALGLPGHPGPM), and 577–636 (GLRG…PGLD). The span at 540–549 (RGPPGLPGPP) shows a compositional bias: pro residues. Residues 563-581 (QPGALGLPGHPGPMGLRGP) are compositionally biased toward low complexity.

It belongs to the cuticular collagen family. Collagen polypeptide chains are complexed within the cuticle by disulfide bonds and other types of covalent cross-links.

Its function is as follows. Nematode cuticles are composed largely of collagen-like proteins. The cuticle functions both as an exoskeleton and as a barrier to protect the worm from its environment. The protein is Putative cuticle collagen 99 of Caenorhabditis briggsae.